The primary structure comprises 361 residues: Chorismate synthase (361 aa).

Arg48 is an NADP(+) binding site. FMN-binding positions include 126 to 128 (RSS), Gly269, 302 to 306 (KPVPS), and Asn328.

It belongs to the chorismate synthase family. As to quaternary structure, homotetramer. It depends on FMNH2 as a cofactor.

The enzyme catalyses 5-O-(1-carboxyvinyl)-3-phosphoshikimate = chorismate + phosphate. It functions in the pathway metabolic intermediate biosynthesis; chorismate biosynthesis; chorismate from D-erythrose 4-phosphate and phosphoenolpyruvate: step 7/7. Its function is as follows. Catalyzes the anti-1,4-elimination of the C-3 phosphate and the C-6 proR hydrogen from 5-enolpyruvylshikimate-3-phosphate (EPSP) to yield chorismate, which is the branch point compound that serves as the starting substrate for the three terminal pathways of aromatic amino acid biosynthesis. This reaction introduces a second double bond into the aromatic ring system. In Treponema denticola (strain ATCC 35405 / DSM 14222 / CIP 103919 / JCM 8153 / KCTC 15104), this protein is Chorismate synthase.